Here is a 318-residue protein sequence, read N- to C-terminus: NADH-ubiquinone oxidoreductase chain 1 (318 aa).

The next 8 helical transmembrane spans lie at 2–22 (FMIN…FLTL), 69–89 (LMFI…WIPL), 100–120 (LGVL…LWSG), 146–166 (LAII…AMLI), 171–191 (YMWL…STLA), 223–243 (FFLA…ILFF), 253–273 (ELYT…FLWI), and 294–314 (LPLT…TASI).

This sequence belongs to the complex I subunit 1 family. Core subunit of respiratory chain NADH dehydrogenase (Complex I) which is composed of 45 different subunits.

It localises to the mitochondrion inner membrane. It carries out the reaction a ubiquinone + NADH + 5 H(+)(in) = a ubiquinol + NAD(+) + 4 H(+)(out). Functionally, core subunit of the mitochondrial membrane respiratory chain NADH dehydrogenase (Complex I) which catalyzes electron transfer from NADH through the respiratory chain, using ubiquinone as an electron acceptor. Essential for the catalytic activity and assembly of complex I. This Felis catus (Cat) protein is NADH-ubiquinone oxidoreductase chain 1 (MT-ND1).